We begin with the raw amino-acid sequence, 254 residues long: MAIANKNIIFVAGLGGIGLDTSREIVKSGPKNLVILDRIDNPTAIAELKAINPKVTVTFYPYDVTVPVAETTKLLKTIFAQLKTVDLLINGAGILDDHQIERTIAVNFTGTVNTTTAIMEFWDKRKGGPGGVVANICSVTGFNAIYQVPVYSASKAAALSFTNSLARLAPITGVTAYSINPGITRTPLVHKFNSWLDVEPRVGELLLEHPTQTTLECAQNFVKAIEANKNGAIWQLDLGQLIAVEWTKHWDSHI.

Position 10–33 (10–33 (FVAGLGGIGLDTSREIVKSGPKNL)) interacts with NAD(+). Ser-138 contributes to the substrate binding site. Tyr-151 acts as the Proton acceptor in catalysis.

Belongs to the short-chain dehydrogenases/reductases (SDR) family. Homodimer.

It catalyses the reaction a primary alcohol + NAD(+) = an aldehyde + NADH + H(+). The enzyme catalyses a secondary alcohol + NAD(+) = a ketone + NADH + H(+). This Drosophila lacicola (Fruit fly) protein is Alcohol dehydrogenase (Adh1).